Consider the following 97-residue polypeptide: MVFFFTSCTIQSAIEQKKTVEEILGKIGESEDKTNSRGQPATMKEDEVEDNPLKDVYKDYFLVGAAINGYSVETAAINHPGMAAILKKTLTVQPYLI.

The interval 27 to 50 is disordered; sequence IGESEDKTNSRGQPATMKEDEVED.

This is an uncharacterized protein from Caldicellulosiruptor saccharolyticus (Caldocellum saccharolyticum).